The chain runs to 229 residues: Cell division protein FtsQ (229 aa).

A helical membrane pass occupies residues 1–21 (MIVLLCVIFAFLVYSNWHSWL). The Periplasmic segment spans residues 22–229 (ESLDRNPIRA…AAVGFSPLPK (208 aa)). The POTRA domain maps to 27-97 (NPIRAYALTH…DRLSITLIEH (71 aa)).

The protein belongs to the FtsQ/DivIB family. FtsQ subfamily. As to quaternary structure, part of a complex composed of FtsB, FtsL and FtsQ.

Its subcellular location is the cell inner membrane. Essential cell division protein. May link together the upstream cell division proteins, which are predominantly cytoplasmic, with the downstream cell division proteins, which are predominantly periplasmic. May control correct divisome assembly. The sequence is that of Cell division protein FtsQ from Actinobacillus pleuropneumoniae serotype 3 (strain JL03).